The following is a 479-amino-acid chain: NADH oxidase (479 aa).

FAD-binding positions include 8-12 (GVNHA), Asp-33, Cys-43, Val-80, 111-114 (ASGA), Lys-149, and Tyr-177. The active-site Proton acceptor is His-11. Cys-43 serves as the catalytic Redox-active. Cys-43 is modified (cysteine sulfinic acid (-SO2H)). NAD(+) contacts are provided by residues 170–185 (VAIVGSGYIGLELAEA), Asp-197, and Gly-264. Residues 295–305 (LNHENVYVIGG), Leu-322, Ala-323, and Thr-324 contribute to the FAD site. Ala-353 is an NAD(+) binding site. Phe-450 is a binding site for FAD.

This sequence belongs to the class-III pyridine nucleotide-disulfide oxidoreductase family. FAD is required as a cofactor.

The enzyme catalyses 2 NADH + O2 + 2 H(+) = 2 NAD(+) + 2 H2O. Catalyzes the four-electron reduction of molecular oxygen to water. The protein is NADH oxidase (nox) of Mycoplasma pneumoniae (strain ATCC 29342 / M129 / Subtype 1) (Mycoplasmoides pneumoniae).